The primary structure comprises 76 residues: U7-lycotoxin-Ls1b (76 aa).

Residues 1–22 (MKLISFTGLALLLIVSLIDVEA) form the signal peptide. Positions 23 to 26 (QNEG) are excised as a propeptide.

The protein belongs to the neurotoxin 19 (CSTX) family. 07 (U7-Lctx) subfamily. Contains 4 disulfide bonds. As to expression, expressed by the venom gland.

It is found in the secreted. The chain is U7-lycotoxin-Ls1b from Lycosa singoriensis (Wolf spider).